The chain runs to 211 residues: Thymidylate kinase (211 aa).

10–17 (GPDGAGKT) contacts ATP.

It belongs to the thymidylate kinase family.

It carries out the reaction dTMP + ATP = dTDP + ADP. Functionally, phosphorylation of dTMP to form dTDP in both de novo and salvage pathways of dTTP synthesis. This is Thymidylate kinase from Lactococcus lactis subsp. cremoris (strain MG1363).